The chain runs to 582 residues: Formate--tetrahydrofolate ligase (582 aa).

ATP is bound at residue T65–T72.

It belongs to the formate--tetrahydrofolate ligase family.

The enzyme catalyses (6S)-5,6,7,8-tetrahydrofolate + formate + ATP = (6R)-10-formyltetrahydrofolate + ADP + phosphate. Its pathway is one-carbon metabolism; tetrahydrofolate interconversion. The sequence is that of Formate--tetrahydrofolate ligase from Vibrio parahaemolyticus serotype O3:K6 (strain RIMD 2210633).